The sequence spans 572 residues: Arginine--tRNA ligase (572 aa).

The 'HIGH' region motif lies at 127-137 (ANPTGPLHVGH).

The protein belongs to the class-I aminoacyl-tRNA synthetase family. In terms of assembly, monomer.

The protein localises to the cytoplasm. It carries out the reaction tRNA(Arg) + L-arginine + ATP = L-arginyl-tRNA(Arg) + AMP + diphosphate. The polypeptide is Arginine--tRNA ligase (Vesicomyosocius okutanii subsp. Calyptogena okutanii (strain HA)).